The following is a 1388-amino-acid chain: MSRPPPTGKMPGAPEAVSGDGAGASRQRKLEALIRDPRSPINVESLLDGLNSLVLDLDFPALRKNKNIDNFLNRYEKIVKKIRGLQMKAEDYDVVKVIGRGAFGEVQLVRHKASQKVYAMKLLSKFEMIKRSDSAFFWEERDIMAFANSPWVVQLFCAFQDDKYLYMVMEYMPGGDLVNLMSNYDVPEKWAKFYTAEVVLALDAIHSMGLIHRDVKPDNMLLDKHGHLKLADFGTCMKMDETGMVHCDTAVGTPDYISPEVLKSQGGDGYYGRECDWWSVGVFLFEMLVGDTPFYADSLVGTYSKIMDHKNSLCFPEDAEISKHAKNLICAFLTDREVRLGRNGVEEIKQHPFFKNDQWNWDNIRETAAPVVPELSSDIDSSNFDDIEDDKGDVETFPIPKAFVGNQLPFIGFTYYRENLLLSDSPSCKENDSIQIRKNEESQEIQKKLYTLEEHLSTEIQAKEELEQKCKSVNTRLEKVAKELEEEIALRKNVESALRQLEREKALLQHKNAEYQRKADHEADKKRNLENDVNSLKDQLEDLKKRNQNSQISTEKVNQLQRQLDETNALLRTESDTAARLRKTQAESSKQIQQLESNNRDLQDKNCLLETAKLKLEKDFINLQSVLESERRDRTHGSEIINDLQGRISGLEEDLKNGKILLTKVEMEKRQLQERFTDLEKEKNNMEIDMTYQLKVIQQSLEQEEAEHKATKARLADKNKIYESIEEAKSEAMKEMEKKLLEERTLKQKVENLLLEAEKRCSILDCDLKQSQQKINELLKQKDVLNEDVRNLTLKIEQETQKRCLTQNDLKMQTQQVNTLKMSEKQLKQENNHLMEMKMSLEKQNAELRKERQDADGQMKELQDQLEAEQYFSTLYKTQVRELKEECEEKTKLCKELQQKKQELQDERDSLAAQLEITLTKADSEQLARSIAEEQYSDLEKEKIMKELEIKEMMARHKQELTEKDTTIASLEETNRTLTSDVANLANEKEELNNKLKDAQEQLSRLKDEEISAAAIKAQFEKQLLTERTLKTQAVNKLAEIMNRKEPVKRGNDTDMRRKEKENRKLHMELKSEREKLTQQMIKYQKELNEMQAQIAEESQIRIELQMTLDSKDSDIEQLRSQLQALHIGLDSSSIGSGPGDAEADDGFPESRLEGWLSLPVRNNTKKFGWVKKYVIVSSKKILFYDSEQDKEQSNPYMVLDIDKLFHVRPVTQTDVYRADAKEIPRIFQILYANEGESKKEQEFPVEPVGEKSNCICHKGHEFIPTLYHFPTNCEACMKPLWHMFKPPPALECRRCHIKCHKDHMDKKEEIIAPCKVYYDISSAKNLLLLANSTEEQQKWVSRLVKKIPKKPPAPDPFARSSPRTSMKIQQNQSIRRPSRQLAANKPS.

The disordered stretch occupies residues 1-24 (MSRPPPTGKMPGAPEAVSGDGAGA). Positions 92-354 (YDVVKVIGRG…VEEIKQHPFF (263 aa)) constitute a Protein kinase domain. ATP contacts are provided by residues 98 to 106 (IGRGAFGEV) and Lys-121. Asp-214 (proton acceptor) is an active-site residue. An AGC-kinase C-terminal domain is found at 357–425 (DQWNWDNIRE…YRENLLLSDS (69 aa)). Residues 363–784 (NIRETAAPVV…INELLKQKDV (422 aa)) form an interaction with PPP1R12A region. Residues 373–420 (PELSSDIDSSNFDDIEDDKGDVETFPIPKAFVGNQLPFIGFTYYRENL) are interaction with NPM1. Thr-414 carries the post-translational modification Phosphothreonine; by ROCK2. In terms of domain architecture, REM-1 spans 497–573 (ALRQLEREKA…LDETNALLRT (77 aa)). The span at 512 to 530 (NAEYQRKADHEADKKRNLE) shows a compositional bias: basic and acidic residues. The interval 512–532 (NAEYQRKADHEADKKRNLEND) is disordered. Tyr-722 bears the Phosphotyrosine; by SRC mark. A RhoBD domain is found at 979 to 1047 (TSDVANLANE…LAEIMNRKEP (69 aa)). Positions 979–1047 (TSDVANLANE…LAEIMNRKEP (69 aa)) are RHOA binding. Residues 1054–1126 (TDMRRKEKEN…EQLRSQLQAL (73 aa)) are a coiled coil. Position 1137 is a phosphoserine (Ser-1137). One can recognise a PH domain in the interval 1150–1349 (ESRLEGWLSL…WVSRLVKKIP (200 aa)). Thr-1212 is subject to Phosphothreonine. Residues 1260–1315 (GHEFIPTLYHFPTNCEACMKPLWHMFKPPPALECRRCHIKCHKDHMDKKEEIIAPC) form a Phorbol-ester/DAG-type zinc finger. Residues 1345–1388 (VKKIPKKPPAPDPFARSSPRTSMKIQQNQSIRRPSRQLAANKPS) form a disordered region. A phosphoserine mark is found at Ser-1362 and Ser-1374. A compositionally biased stretch (polar residues) spans 1362–1376 (SPRTSMKIQQNQSIR).

The protein belongs to the protein kinase superfamily. AGC Ser/Thr protein kinase family. Homodimer. Interacts with IRS1. Interacts with RAF1. Interacts with RHOA (activated by GTP), RHOB and RHOC. Interacts with PPP1R12A. Interacts with EP300. Interacts with CHORDC1. Interacts with BRCA2. Interacts with NPM1; this interaction enhances ROCK2 activity. Interacts with SORL1. Interacts with PJVK. Requires Mg(2+) as cofactor. Autophosphorylated. Phosphorylation at Tyr-722 reduces its binding to RHOA and is crucial for focal adhesion dynamics. Dephosphorylation by PTPN11 stimulates its RHOA binding activity. Post-translationally, cleaved by granzyme B during apoptosis. This leads to constitutive activation of the kinase and membrane blebbing.

Its subcellular location is the cytoplasm. It is found in the cell membrane. The protein resides in the nucleus. It localises to the cytoskeleton. The protein localises to the microtubule organizing center. Its subcellular location is the centrosome. The enzyme catalyses L-seryl-[protein] + ATP = O-phospho-L-seryl-[protein] + ADP + H(+). It catalyses the reaction L-threonyl-[protein] + ATP = O-phospho-L-threonyl-[protein] + ADP + H(+). Its activity is regulated as follows. Activated by RHOA binding. Inhibited by Y-27632. In terms of biological role, protein kinase which is a key regulator of actin cytoskeleton and cell polarity. Involved in regulation of smooth muscle contraction, actin cytoskeleton organization, stress fiber and focal adhesion formation, neurite retraction, cell adhesion and motility via phosphorylation of ADD1, BRCA2, CNN1, EZR, DPYSL2, EP300, MSN, MYL9/MLC2, NPM1, RDX, PPP1R12A and VIM. Phosphorylates SORL1 and IRF4. Acts as a negative regulator of VEGF-induced angiogenic endothelial cell activation. Positively regulates the activation of p42/MAPK1-p44/MAPK3 and of p90RSK/RPS6KA1 during myogenic differentiation. Plays an important role in the timely initiation of centrosome duplication. Inhibits keratinocyte terminal differentiation. May regulate closure of the eyelids and ventral body wall through organization of actomyosin bundles. Plays a critical role in the regulation of spine and synaptic properties in the hippocampus. Plays an important role in generating the circadian rhythm of the aortic myofilament Ca(2+) sensitivity and vascular contractility by modulating the myosin light chain phosphorylation. The sequence is that of Rho-associated protein kinase 2 (ROCK2) from Sus scrofa (Pig).